Here is a 122-residue protein sequence, read N- to C-terminus: Cofilin/actin-depolymerizing factor homolog 1 (122 aa).

The ADF-H domain occupies 4–122 (GIRVNDNCVT…ESAQDVADLK (119 aa)).

This sequence belongs to the actin-binding proteins ADF family. As to quaternary structure, interacts with monomeric actin, does not bind to actin polymers.

Its subcellular location is the cytoplasm. It is found in the cytoskeleton. Not involved in actin polymerisation, instead functions to stimulate nucleotide exchange on monomeric actin and influence turnover of the small amount of cytosolic actin microfilaments. Essential for erythrocytic schizogony. This chain is Cofilin/actin-depolymerizing factor homolog 1, found in Plasmodium falciparum (isolate 3D7).